Reading from the N-terminus, the 131-residue chain is Translation initiation factor 5A (131 aa).

Position 37 is a hypusine (lysine 37).

This sequence belongs to the eIF-5A family.

It localises to the cytoplasm. Its function is as follows. Functions by promoting the formation of the first peptide bond. In Methanococcus aeolicus (strain ATCC BAA-1280 / DSM 17508 / OCM 812 / Nankai-3), this protein is Translation initiation factor 5A (eIF5A).